A 393-amino-acid chain; its full sequence is Beta-ureidopropionase (393 aa).

Residues 72 to 344 (VRVGLVQNRI…DGLLVTELNL (273 aa)) enclose the CN hydrolase domain. Catalysis depends on glutamate 119, which acts as the Proton acceptor. Lysine 196 serves as the catalytic Proton donor. The active-site Nucleophile is cysteine 233. Serine 378 is modified (phosphoserine).

This sequence belongs to the carbon-nitrogen hydrolase superfamily. BUP family. In terms of assembly, homodimer, homotetramer, homooctamer; can also form higher homooligomers. Post-translationally, the N-terminus is blocked. Detected in liver (at protein level).

The protein localises to the cytoplasm. The catalysed reaction is 3-(carbamoylamino)propanoate + H2O + 2 H(+) = beta-alanine + NH4(+) + CO2. It carries out the reaction 3-(carbamoylamino)-2-methylpropanoate + H2O + 2 H(+) = (R)-3-amino-2-methylpropanoate + NH4(+) + CO2. It participates in amino-acid biosynthesis; beta-alanine biosynthesis. Allosteric enzyme with positive cooperativity toward the substrate N-carbamoyl-beta-alanine at low substrate concentrations (below 12 nM). Displays no cooperativity at substrate levels above 12 nM. Its function is as follows. Catalyzes a late step in pyrimidine degradation. Converts N-carbamoyl-beta-alanine (3-ureidopropanoate) into beta-alanine, ammonia and carbon dioxide. Likewise, converts N-carbamoyl-beta-aminoisobutyrate (3-ureidoisobutyrate) into beta-aminoisobutyrate, ammonia and carbon dioxide. The polypeptide is Beta-ureidopropionase (Upb1) (Rattus norvegicus (Rat)).